The following is a 1435-amino-acid chain: Cardiac-enriched FHL2-interacting protein (1435 aa).

Disordered stretches follow at residues 109–176 (EEKY…PPKF), 203–234 (SNTH…GSSS), 250–270 (FPSP…GTFL), and 291–311 (KDTA…DTTL). At Thr-120 the chain carries Phosphothreonine. A compositionally biased stretch (polar residues) spans 133–147 (LRSSNKPVSKVSTLI). Residues 149 to 160 (SFDRTESQRCES) are compositionally biased toward basic and acidic residues. Position 323 is a phosphoserine (Ser-323). 6 disordered regions span residues 362–592 (EGKA…LTLS), 609–772 (AERS…EKEN), 795–847 (SQGE…SPSS), 1007–1108 (PEGD…ARVT), 1138–1261 (SPRG…PGGP), and 1363–1435 (QGPR…EGIS). Residues 389–402 (KGKESLQDTLEEKT) show a composition bias toward basic and acidic residues. Ser-470 bears the Phosphoserine mark. 4 stretches are compositionally biased toward basic and acidic residues: residues 479–493 (QEKE…DSYK), 522–535 (VLDE…DGKQ), 609–620 (AERSSYENKEVE), and 650–667 (CNRD…KTHQ). Residues 668-679 (LENGLSRSVSQE) show a composition bias toward polar residues. Residues 727-741 (KFSTSSSDQSFASFD) are compositionally biased toward low complexity. The span at 751-772 (NQREDRRKDVSAGDSQKDEKEN) shows a compositional bias: basic and acidic residues. Phosphoserine is present on Ser-816. The span at 831-847 (KGTTFSQAKDLTPSPSS) shows a compositional bias: polar residues. Residues 1055–1066 (NSPNPGSPGESS) are compositionally biased toward low complexity. The span at 1067–1082 (ACSPAASNIWEESSQA) shows a compositional bias: polar residues. Positions 1083–1093 (PGGPELLPEEP) are enriched in low complexity. A compositionally biased stretch (polar residues) spans 1094-1105 (NQASPWASSSPA). Residues 1182 to 1193 (RRAKKLASKRRK) are compositionally biased toward basic residues. Basic and acidic residues predominate over residues 1194–1211 (TDQAQEKHGESQEGKPCP). The segment covering 1424-1435 (DDLEDFATEGIS) has biased composition (acidic residues).

In terms of assembly, interacts with FHL2. As to expression, expressed in the heart and skeletal muscle.

The protein localises to the cytoplasm. Its subcellular location is the myofibril. The protein resides in the sarcomere. It is found in the z line. Plays an important role in cardiomyocyte hypertrophy via activation of the calcineurin/NFAT signaling pathway. This Homo sapiens (Human) protein is Cardiac-enriched FHL2-interacting protein.